We begin with the raw amino-acid sequence, 698 residues long: MTPIVKSFQYGEHTVTLETGVMARQATAAVMCSMDDTCVFVSVVGKNADNQERDFFPLTVNYQEKTYAAGKIPGGFFKREGRPSEDETLIARLIDRPVRPLFPAGFKNEVQVIATVVSINPEVNPDVVAMIATSAALSISGMPFKGPIGCARVGYKEGEYLLNPTKTELETSDLNLVVSGTDNAVLMVESEAGILSEDVMLGAVVFGHDQQQIVVESIKEFAAEVARPAWNWAAPARNEALDAAIATEAQARFEQAYQISDKGDRYDAIKAITSEVKEKLLASDETLEAKQIGEYLHDLEKTVVRTRIIKGEPRIDGRDPESIRALDVRTGVLPRTHGSALFTRGETQALVTATLGTQRDAQIIDSIMGEKKDNFLLHYNFPPYCVGETGFVGSPKRREIGHGRLAKRGVLAVMPSLEEFPYTVRVVSEITESNGSSSMASVCGASLALMDAGVPLKASVAGIAMGLVKEGEEFVVLSDILGDEDHLGDMDFKVAGTTEGITALQMDIKIEGITREIMQIALNQAKAARLHILTVMDQALPQGRADISQFAPRIHTIKINTDKIRDVIGKGGAVIRSLCEETGTTIEIEDDGTVKIAATSGEQADDAINRIKALTAEVEVGTIYTGKVVRLADFGAFVNILPGKDGLVHISQICEERVQKVSDHLKEGQEVKVKVLEVDRQGRVRLSIKEAAEKTTAE.

2 residues coordinate Mg(2+): Asp485 and Asp491. The 60-residue stretch at 552 to 611 (PRIHTIKINTDKIRDVIGKGGAVIRSLCEETGTTIEIEDDGTVKIAATSGEQADDAINRI) folds into the KH domain. The region spanning 621–689 (GTIYTGKVVR…RQGRVRLSIK (69 aa)) is the S1 motif domain.

Belongs to the polyribonucleotide nucleotidyltransferase family. In terms of assembly, component of the RNA degradosome, which is a multiprotein complex involved in RNA processing and mRNA degradation. Mg(2+) serves as cofactor.

The protein resides in the cytoplasm. It carries out the reaction RNA(n+1) + phosphate = RNA(n) + a ribonucleoside 5'-diphosphate. In terms of biological role, involved in mRNA degradation. Catalyzes the phosphorolysis of single-stranded polyribonucleotides processively in the 3'- to 5'-direction. The sequence is that of Polyribonucleotide nucleotidyltransferase from Psychromonas ingrahamii (strain DSM 17664 / CCUG 51855 / 37).